Here is a 305-residue protein sequence, read N- to C-terminus: MMSNYNKNNLFAKLAYGDLSEVQALLKSGVNIDEHKNERGETALYNTLFTGYMDRAAFLLKHKASPNIPDNSGQTILYLLVMNNSIDKMKFLFENTTNIDLEIKSFCGHSPLHAATFNENIEAMELLLKKGADINSKDSFGASALHGTIYNNKLKAAELLLNHGADVNAKDNYEDTILHNIIGTNNIEAAKFLLQNGADVNIENNNNFTPLDRAILGQHKELAELFLKSGATIKIGNTMDFKILSEKLLDMNIDKELVFKSLLISNIDDQTKFQLLSDFNFKADIHHKIGLLLSLTLNCIFSAYK.

ANK repeat units follow at residues 5–34 (YNKNNLFAKLAYGDLSEVQALLKSGVNIDE), 39–68 (RGETALYNTLFTGYMDRAAFLLKHKASPNI), 72–101 (SGQTILYLLVMNNSIDKMKFLFENTTNIDL), 107–136 (CGHSPLHAATFNENIEAMELLLKKGADINS), 140–169 (FGASALHGTIYNNKLKAAELLLNHGADVNA), 173–202 (YEDTILHNIIGTNNIEAAKFLLQNGADVNI), and 206–235 (NNFTPLDRAILGQHKELAELFLKSGATIKI).

This is Putative ankyrin repeat protein RF_0580 from Rickettsia felis (strain ATCC VR-1525 / URRWXCal2) (Rickettsia azadi).